Here is a 375-residue protein sequence, read N- to C-terminus: Hemolysin BL-binding component (375 aa).

Positions 1 to 31 (MIKKIPYKLLAVSTLLTITTANVVSPVATFA) are cleaved as a signal peptide. The chain crosses the membrane as a helical span at residues 232-252 (FNVMKGAILGLPIIGGIIVGV).

In terms of assembly, composed of a binding component, B, and two lytic components, L1 and L2. All three subunits act synergically to cause hemolysis.

The protein resides in the secreted. Its subcellular location is the host cell membrane. In terms of biological role, cytotoxic protein, part of the enterotoxin complex. Responsible for binding to erythrocytes. This enterotoxin is thought to be the cause of the diarrheal form of gastroenteritis caused by food-borne strains of B.cereus. This chain is Hemolysin BL-binding component (hblA), found in Bacillus cereus.